Consider the following 256-residue polypeptide: Phosphate import ATP-binding protein PstB (256 aa).

Residues 10–251 enclose the ABC transporter domain; the sequence is IRTVNVNFYY…PEQKQTEDYI (242 aa). Residue 42–49 coordinates ATP; the sequence is GPSGCGKS.

It belongs to the ABC transporter superfamily. Phosphate importer (TC 3.A.1.7) family. In terms of assembly, the complex is composed of two ATP-binding proteins (PstB), two transmembrane proteins (PstC and PstA) and a solute-binding protein (PstS).

It is found in the cell inner membrane. It carries out the reaction phosphate(out) + ATP + H2O = ADP + 2 phosphate(in) + H(+). In terms of biological role, part of the ABC transporter complex PstSACB involved in phosphate import. Responsible for energy coupling to the transport system. The protein is Phosphate import ATP-binding protein PstB of Syntrophus aciditrophicus (strain SB).